We begin with the raw amino-acid sequence, 161 residues long: Nucleotide-binding protein Bcep18194_A5887 (161 aa).

This sequence belongs to the YajQ family.

In terms of biological role, nucleotide-binding protein. This chain is Nucleotide-binding protein Bcep18194_A5887, found in Burkholderia lata (strain ATCC 17760 / DSM 23089 / LMG 22485 / NCIMB 9086 / R18194 / 383).